A 526-amino-acid chain; its full sequence is GMP synthase [glutamine-hydrolyzing] (526 aa).

A Glutamine amidotransferase type-1 domain is found at 9–208; that stretch reads RILILDFGSQ…VMDICGCETL (200 aa). The active-site Nucleophile is the Cys86. Residues His182 and Glu184 contribute to the active site. A GMPS ATP-PPase domain is found at 209–401; sequence WTSSSIIEDA…LGLPYEMLYR (193 aa). Position 236-242 (236-242) interacts with ATP; sequence SGGVDSS.

Homodimer.

It catalyses the reaction XMP + L-glutamine + ATP + H2O = GMP + L-glutamate + AMP + diphosphate + 2 H(+). It functions in the pathway purine metabolism; GMP biosynthesis; GMP from XMP (L-Gln route): step 1/1. In terms of biological role, catalyzes the synthesis of GMP from XMP. This Psychromonas ingrahamii (strain DSM 17664 / CCUG 51855 / 37) protein is GMP synthase [glutamine-hydrolyzing].